The chain runs to 156 residues: Small ribosomal subunit protein uS7 (156 aa).

It belongs to the universal ribosomal protein uS7 family. As to quaternary structure, part of the 30S ribosomal subunit. Contacts proteins S9 and S11.

Functionally, one of the primary rRNA binding proteins, it binds directly to 16S rRNA where it nucleates assembly of the head domain of the 30S subunit. Is located at the subunit interface close to the decoding center, probably blocks exit of the E-site tRNA. The chain is Small ribosomal subunit protein uS7 from Mycobacteroides abscessus (strain ATCC 19977 / DSM 44196 / CCUG 20993 / CIP 104536 / JCM 13569 / NCTC 13031 / TMC 1543 / L948) (Mycobacterium abscessus).